A 217-amino-acid chain; its full sequence is Peroxiredoxin Q, chloroplastic (217 aa).

Residues 1-66 (MAFAASTACC…RRRAASTGIV (66 aa)) constitute a chloroplast transit peptide. Residues 70-217 (VSKGSVPPNF…GETLKIIQNL (148 aa)) form the Thioredoxin domain. Cys-112 (cysteine sulfenic acid (-SOH) intermediate) is an active-site residue. Cys-112 and Cys-117 are disulfide-bonded.

It belongs to the peroxiredoxin family. BCP/PrxQ subfamily. As to quaternary structure, monomer.

It is found in the plastid. The protein localises to the chloroplast thylakoid lumen. The catalysed reaction is a hydroperoxide + [thioredoxin]-dithiol = an alcohol + [thioredoxin]-disulfide + H2O. Thiol-specific peroxidase that catalyzes the reduction of hydrogen peroxide and organic hydroperoxides to water and alcohols, respectively. Plays a role in cell protection against oxidative stress by detoxifying peroxides. The chain is Peroxiredoxin Q, chloroplastic (PRX1) from Triticum aestivum (Wheat).